The sequence spans 261 residues: uncharacterized protein (261 aa).

A divalent metal cation contacts are provided by Asp43, His45, Asp75, Asn106, His197, and His199.

Belongs to the metallophosphoesterase superfamily. Requires a divalent metal cation as cofactor.

This is an uncharacterized protein from Aquifex aeolicus (strain VF5).